The sequence spans 385 residues: Muconate cycloisomerase 1-2 (385 aa).

The active site involves Lys-171. The Mn(2+) site is built by Glu-226 and Asp-251.

This sequence belongs to the mandelate racemase/muconate lactonizing enzyme family. As to quaternary structure, homooctamer. It depends on Mn(2+) as a cofactor.

It carries out the reaction (S)-muconolactone = cis,cis-muconate + H(+). The protein operates within aromatic compound metabolism; beta-ketoadipate pathway; 5-oxo-4,5-dihydro-2-furylacetate from catechol: step 2/3. In terms of biological role, catalyzes a syn cycloisomerization. The polypeptide is Muconate cycloisomerase 1-2 (catB2) (Acinetobacter lwoffii).